The following is an 827-amino-acid chain: Rho GTPase-activating protein 6 (827 aa).

In terms of domain architecture, PH spans 18–125 (TVYKSGPLFI…WKAALEQALA (108 aa)). Residues 172–371 (LALEEIDGSP…ALLEDYGNMI (200 aa)) enclose the Rho-GAP domain. Disordered stretches follow at residues 379–437 (CSTS…SDYA) and 517–561 (YTTS…SSGN). The segment covering 401 to 412 (IVVKHPDLHTLD) has biased composition (basic and acidic residues). Positions 413–423 (IEEGETDDDND) are enriched in acidic residues. A compositionally biased stretch (polar residues) spans 517-543 (YTTSAEKPASKTTGSSTVNSKRSSSWG). The stretch at 560–684 (GNDELLIQRL…HQLSQQRQHH (125 aa)) forms a coiled coil.

Functionally, acts as a GTPase activator for the Rac-type GTPase by converting it to an inactive GDP-bound state. The protein is Rho GTPase-activating protein 6 (ROPGAP6) of Arabidopsis thaliana (Mouse-ear cress).